Reading from the N-terminus, the 184-residue chain is Ribosome-recycling factor (184 aa).

This sequence belongs to the RRF family.

The protein resides in the cytoplasm. Responsible for the release of ribosomes from messenger RNA at the termination of protein biosynthesis. May increase the efficiency of translation by recycling ribosomes from one round of translation to another. The sequence is that of Ribosome-recycling factor from Thermoanaerobacter pseudethanolicus (strain ATCC 33223 / 39E) (Clostridium thermohydrosulfuricum).